The primary structure comprises 463 residues: MLSLFYQRISTYIKLSASSLLSILPLYRPFQRRRLTMPSNEGSISSSSTTRPKDVLVVGGSYSGLAAALNLLDLCQGRSCRFAGALDPEISEPAEMRERVPVQITIVDERDGYFHLIGTPLAFASEEYALSAWRKFADIPALQTPAIKFIQGSVTRVDCERKISTIKEAGTNNEISQKYDYLVASSGLRRTWPSAPQSLNKDKYLEEVGEHIAKIKMANGGVVVIGGGAVGIEMASELKEMHPDLRVTLIHSRAKLLSSEPLPDEFRDRALELLHETGVETILGSRVIRTTQTELNGAATPSYTLSLTDGRTIKAGYVINAISKYSPTTAYLPSSVLDKEGYVKVNSALNFTDEVPNAKYHFAAGDLALWSGIKRAGRAMHHGHYVGMNIYQQLLNERFGTKPKFSEMAHAPPSMAVAVGKNTVAYGTEQGVVSGEEIAKIFFEDDLGFGICWRYLKLGEAPK.

Residues 59–63 (GGSYS), Val154, and Asp366 each bind 6-hydroxy-FAD.

The protein belongs to the FAD-dependent oxidoreductase family. The cofactor is 6-hydroxy-FAD.

It functions in the pathway siderophore biosynthesis. In terms of biological role, oxidoreductase; part of the gene cluster that mediates the biosynthesis of hydroxamate-containing siderophores that play a critical role in virulence via intracellular iron acquisition during macrophage infection. This Ajellomyces capsulatus (Darling's disease fungus) protein is Oxidoreductase OXR1.